A 207-amino-acid chain; its full sequence is Small ribosomal subunit protein uS4 (207 aa).

The tract at residues 31–51 (KCKLDSKPGQHGRTSGARTSD) is disordered. An S4 RNA-binding domain is found at 97–160 (SRLDNVVYRM…KKQARIRESL (64 aa)).

This sequence belongs to the universal ribosomal protein uS4 family. As to quaternary structure, part of the 30S ribosomal subunit. Contacts protein S5. The interaction surface between S4 and S5 is involved in control of translational fidelity.

One of the primary rRNA binding proteins, it binds directly to 16S rRNA where it nucleates assembly of the body of the 30S subunit. In terms of biological role, with S5 and S12 plays an important role in translational accuracy. The protein is Small ribosomal subunit protein uS4 of Bordetella avium (strain 197N).